Reading from the N-terminus, the 334-residue chain is Biotin synthase (334 aa).

A Radical SAM core domain is found at 54-281; the sequence is QAIQLSTLLS…KSYVRLSAGR (228 aa). Positions 69, 73, and 76 each coordinate [4Fe-4S] cluster. The [2Fe-2S] cluster site is built by cysteine 113, cysteine 144, cysteine 204, and arginine 276.

The protein belongs to the radical SAM superfamily. Biotin synthase family. As to quaternary structure, homodimer. Requires [4Fe-4S] cluster as cofactor. [2Fe-2S] cluster is required as a cofactor.

The catalysed reaction is (4R,5S)-dethiobiotin + (sulfur carrier)-SH + 2 reduced [2Fe-2S]-[ferredoxin] + 2 S-adenosyl-L-methionine = (sulfur carrier)-H + biotin + 2 5'-deoxyadenosine + 2 L-methionine + 2 oxidized [2Fe-2S]-[ferredoxin]. It functions in the pathway cofactor biosynthesis; biotin biosynthesis; biotin from 7,8-diaminononanoate: step 2/2. Its function is as follows. Catalyzes the conversion of dethiobiotin (DTB) to biotin by the insertion of a sulfur atom into dethiobiotin via a radical-based mechanism. The chain is Biotin synthase from Haemophilus ducreyi (strain 35000HP / ATCC 700724).